Reading from the N-terminus, the 582-residue chain is Guanine nucleotide-binding protein-like NSN1 (582 aa).

A compositionally biased stretch (basic residues) spans 1 to 46 (MVKRSKKSKSKRVTLKQKHKVLKKVKEHHKKKAKDAKKLGLHRKPR). The disordered stretch occupies residues 1 to 58 (MVKRSKKSKSKRVTLKQKHKVLKKVKEHHKKKAKDAKKLGLHRKPRVEKDPGIPNDWP). The segment at 2–49 (VKRSKKSKSKRVTLKQKHKVLKKVKEHHKKKAKDAKKLGLHRKPRVEK) is basic. Short sequence motifs (nuclear localization signal) lie at residues 5-12 (SKKSKSKR), 22-29 (LKKVKEHH), and 69-76 (VRRARALE). The stretch at 15 to 94 (LKQKHKVLKK…RKERAKKRKL (80 aa)) forms a coiled coil. A CP-type G domain is found at 127–311 (YKELVKVIEL…LLDCPGVVML (185 aa)). The DARXP motif signature appears at 145-149 (DARDP). Residues 175–178 (NKID) form a G4 region. 175 to 178 (NKID) contributes to the GTP binding site. The G5 stretch occupies residues 202–204 (KCS). The tract at residues 260-267 (GLPNVGKS) is G1. Residue 263-268 (NVGKSS) coordinates GTP. The intermediate stretch occupies residues 281–456 (VGATPGLTRS…NEFNPVIIPS (176 aa)). The interval 286-290 (GLTRS) is G2. GTP is bound by residues 304–307 (DCPG) and Gly307. Positions 304 to 307 (DCPG) are G3. The tract at residues 463–551 (DETMIEDESK…EEDLMDGDYD (89 aa)) is acidic. The disordered stretch occupies residues 469-545 (DESKTQTEEE…KKAGADEEDL (77 aa)). A compositionally biased stretch (acidic residues) spans 476–496 (EEEAEHESDDDESMGGEEEEE). The segment covering 497-506 (AGKTKEKSET) has biased composition (basic and acidic residues). A coiled-coil region spans residues 515 to 537 (AAESMLNTKKQKAEKKKRKKAKK). Residues 522-529 (TKKQKAEK) carry the Nuclear localization signal 4 motif. Residues 523 to 537 (KKQKAEKKKRKKAKK) are compositionally biased toward basic residues.

This sequence belongs to the TRAFAC class YlqF/YawG GTPase family. As to quaternary structure, interacts with EBP2 and PES. In terms of tissue distribution, mostly expressed in flowers, siliques and inflorescence apex, and, to a lower extent, in stems and leaves.

It localises to the nucleus. Its subcellular location is the nucleolus. Functionally, involved in the differentiation of epidermal cells, probably via the regulation of the expression of meristem-related genes (e.g. CLV3, STM, KNAT1, CUC2 and AG) and of leaf polarity-related genes (e.g. YAB5, FIL, AS2, PHB and PHV). May play a role in regulating cellular proliferation. Necessary for flower development, probably by preventing apical dominance through the down-regulation of AG expression. Required for embryogenesis, leaf and cotyledon development, as well as for leaf polarity establishment. Plays an important role in plant growth and senescence by modulating ribosome biogenesis in nucleolus. Possesses GTPAse activity in vitro. Possesses RNA binding activity in vitro. Associates with ribosomes. This is Guanine nucleotide-binding protein-like NSN1 from Arabidopsis thaliana (Mouse-ear cress).